Reading from the N-terminus, the 495-residue chain is Syntaphilin (495 aa).

Positions 1 to 74 (MAMSLQGSRR…HGIKPPTPEQ (74 aa)) are disordered. A compositionally biased stretch (low complexity) spans 7–49 (GSRRASAGSRRRTSPPVSVRDAYGTSSLSSSSNSGSCKGSDSS). Positions 79–161 (LQQKEVCIRH…VKNNLIDKDK (83 aa)) form a coiled coil. Residues 191-244 (VAKEEGTGESAGGSPARSLTRSSTYTKLSDPAVCGDRQPGDPSNTSAEDGADSG) form a disordered region. A phosphoserine mark is found at Ser-200 and Ser-204. A compositionally biased stretch (polar residues) spans 207 to 217 (RSLTRSSTYTK). Thr-214 is modified (phosphothreonine). Residue Ser-219 is modified to Phosphoserine. Thr-235 bears the Phosphothreonine mark. Residues 427-446 (YIVDLLAVVVPAVPTVAWLC) traverse the membrane as a helical segment.

In terms of assembly, binds to STX1A. Interacts with DNM1; this interaction inhibits the binding of DNM1 to AMPH and DNM1-receptor-mediated endocytosis.

The protein resides in the membrane. Its subcellular location is the synapse. It is found in the synaptosome. Functionally, inhibits SNARE complex formation by absorbing free STX1A. The sequence is that of Syntaphilin from Mus musculus (Mouse).